Consider the following 66-residue polypeptide: Large ribosomal subunit protein bL35 (66 aa).

It belongs to the bacterial ribosomal protein bL35 family.

This is Large ribosomal subunit protein bL35 from Thermodesulfovibrio yellowstonii (strain ATCC 51303 / DSM 11347 / YP87).